Reading from the N-terminus, the 506-residue chain is ATP synthase subunit alpha (506 aa).

170–177 (GDRQTGKT) is an ATP binding site.

Belongs to the ATPase alpha/beta chains family. In terms of assembly, F-type ATPases have 2 components, CF(1) - the catalytic core - and CF(0) - the membrane proton channel. CF(1) has five subunits: alpha(3), beta(3), gamma(1), delta(1), epsilon(1). CF(0) has four main subunits: a(1), b(1), b'(1) and c(9-12).

Its subcellular location is the cellular thylakoid membrane. It catalyses the reaction ATP + H2O + 4 H(+)(in) = ADP + phosphate + 5 H(+)(out). Functionally, produces ATP from ADP in the presence of a proton gradient across the membrane. The alpha chain is a regulatory subunit. The polypeptide is ATP synthase subunit alpha (Synechococcus sp. (strain CC9605)).